The sequence spans 396 residues: MATAATATAGSRAAVLLLLSLALALALRPSDAGAGGDCHFPAVFNFGDSNSDTGGLSSLFGAAPPPNGRTFFGMPAGRYCDGRLVIDFIAESLGLTHLSAYLNSIGSNFTQGANFATAGSSIRRQNTSLFLSGFSPISLDVQFWEFEQFINRSQLVYNNKGGIYREILPRAEYFSQALYTFDIGQNDITSSYFVNNTTEEVEAIIPDLMERLTSIIQSVYSRGGRYFWIHNTGPLGCLPYALLHRPDLAIPADGTGCSVTYNKVAQLFNLRLKETVASLRKTHPDAAFTYVDVYTAKYKLISQANKLGFDDPLLTCCGYGGGRYNLDLSVGCGGKKQVNGTSVVVGKSCENPSKRVSWDGVHFTEAANKFVFDQIVAGALSDPPVALRQACHSRGQ.

Positions 1–31 (MATAATATAGSRAAVLLLLSLALALALRPSD) are cleaved as a signal peptide. The active-site Nucleophile is the serine 49. 5 N-linked (GlcNAc...) asparagine glycosylation sites follow: asparagine 108, asparagine 126, asparagine 151, asparagine 196, and asparagine 339. Catalysis depends on residues aspartate 359 and histidine 362.

The protein belongs to the 'GDSL' lipolytic enzyme family.

The protein resides in the secreted. Functionally, esterase that can hydrolyze acetylthiocholine and propionylthiocholine in vitro. Substrate preference is propionylthiocholine &gt; acetylthiocholine. Possesses extremely low activity against butyrylthiocholine. This is GDSL esterase/lipase ACHE from Zea mays (Maize).